Here is a 308-residue protein sequence, read N- to C-terminus: GTP cyclohydrolase FolE2 (308 aa).

The protein belongs to the GTP cyclohydrolase IV family.

It carries out the reaction GTP + H2O = 7,8-dihydroneopterin 3'-triphosphate + formate + H(+). It participates in cofactor biosynthesis; 7,8-dihydroneopterin triphosphate biosynthesis; 7,8-dihydroneopterin triphosphate from GTP: step 1/1. Functionally, converts GTP to 7,8-dihydroneopterin triphosphate. The sequence is that of GTP cyclohydrolase FolE2 from Idiomarina loihiensis (strain ATCC BAA-735 / DSM 15497 / L2-TR).